Here is a 357-residue protein sequence, read N- to C-terminus: Fructose-bisphosphate aldolase, cytoplasmic isozyme (357 aa).

Residues Arg53 and Lys142 each coordinate substrate. Glu183 serves as the catalytic Proton acceptor. Lys225 functions as the Schiff-base intermediate with dihydroxyacetone-P in the catalytic mechanism.

The protein belongs to the class I fructose-bisphosphate aldolase family.

The protein resides in the cytoplasm. It catalyses the reaction beta-D-fructose 1,6-bisphosphate = D-glyceraldehyde 3-phosphate + dihydroxyacetone phosphate. It participates in carbohydrate degradation; glycolysis; D-glyceraldehyde 3-phosphate and glycerone phosphate from D-glucose: step 4/4. This Spinacia oleracea (Spinach) protein is Fructose-bisphosphate aldolase, cytoplasmic isozyme.